Here is a 732-residue protein sequence, read N- to C-terminus: Acylamino-acid-releasing enzyme (732 aa).

Met1 is modified (blocked amino end (Met); alternate). At Met1 the chain carries N-acetylmethionine; alternate. Phosphoserine is present on residues Ser185 and Ser187. Residues Ser587, Asp675, and His707 each act as charge relay system in the active site.

The protein belongs to the peptidase S9C family. In terms of assembly, homotetramer.

It localises to the cytoplasm. The catalysed reaction is Cleavage of an N-acetyl or N-formyl amino acid from the N-terminus of a polypeptide.. Homotetramerization is required for activity. Tetramerization results in the formation of a gated channel which is involved in substrate selection and substrate access to the catalytic sites. Functionally, this enzyme catalyzes the hydrolysis of the N-terminal peptide bond of an N-acetylated peptide to generate an N-acetylated amino acid and a peptide with a free N-terminus. It preferentially cleaves off Ac-Ala, Ac-Met and Ac-Ser. Also, involved in the degradation of oxidized and glycated proteins. In Rattus norvegicus (Rat), this protein is Acylamino-acid-releasing enzyme (Apeh).